Reading from the N-terminus, the 66-residue chain is Large ribosomal subunit protein uL29 (66 aa).

The protein belongs to the universal ribosomal protein uL29 family.

The protein is Large ribosomal subunit protein uL29 of Rhizobium etli (strain CIAT 652).